Reading from the N-terminus, the 867-residue chain is MCDIDLKTCEKSSKYKKKDIVDLGKKCGVDPYLPNGREKTRQVICTEIVNQYSTNPPSSSSESDDDEDMGKQDQDPICGISEKECNKLDNVNLLALGEYCGVDIYTPEGNLKTSKTICKSVSLKQSSPKAQKSPNKNDLINMDPANLKKLAKKLDIDWKKKDIKELQYLIAKKLNSIKSVSPSRSPSPRRSRSPSPNIQNMKKKELKALAKALGASDKKLDKMDKNQLIEYILSRKKSPSPVRKSRSPSLRQRSRSPGRSRSNSPVRPKYRAADLLGKKVVELKELAKMEGLKKWKDKTPSKMLKQDLVDFLLHVGGGGQLPKTPSPVKPSASPKTRAELALLKVPELKAMALSYGLKNFKDKTPSQLRKNDFIDFIILSTQKSQSPPPSIRSKPRSSSPKYKTKDLVTTDESDGEIVVKKITRKPKSPRRSPPASVRRSRTPSVPKSPSARPRSKSPSVRAEITDDEGETPPSSVRPKSPSVRPKSPSVRPRSKSPSVRPKSPSARPRSKSPSVRSKSPSVRPKSPSVRPKSPSVRPRSKSPSVRPKSPSVRPPPPDPSNSPSITVDPSVTPPSSVKIKKRPELPEYKGGNADRDLEILARRRGYKVIPVKGDGNCLFRAVGKSLRLNQNIKYSHEDLRAQVVTYLTSHKEFLEPYLEYVTESGDTTPQEYAKNVERYIKNISKPGTWGDFICLRVLSEILKVKFNLLILNTRNFQVISNNDTFKPLIPLGFIDDYHYTALTPLYAEPIAVLENETPTPSIAPSIRPPPSIIPSIAPSVRPSIAPSVRPSIVPATPSIVPSLKPSVVPKLTPSIAPKIPPPVFGPVKPLSSTRELLEEADKVHPYVREDISQLARAEEQILVSLGM.

Disordered stretches follow at residues 49-73 (VNQYSTNPPSSSSESDDDEDMGKQD), 177-204 (IKSVSPSRSPSPRRSRSPSPNIQNMKKK), 231-271 (YILS…PKYR), and 379-591 (LSTQ…YKGG). 2 stretches are compositionally biased toward basic residues: residues 234 to 258 (SRKKSPSPVRKSRSPSLRQRSRSPG) and 421 to 430 (KITRKPKSPR). 2 stretches are compositionally biased toward low complexity: residues 433–462 (PPASVRRSRTPSVPKSPSARPRSKSPSVRA) and 472–551 (PPSS…KSPS). The span at 565 to 575 (ITVDPSVTPPS) shows a compositional bias: polar residues. Residues 582-591 (RPELPEYKGG) are compositionally biased toward basic and acidic residues. Positions 606 to 745 (YKVIPVKGDG…DYHYTALTPL (140 aa)) constitute an OTU domain. Residue Asp614 is part of the active site. The active-site Nucleophile is Cys617. His738 is a catalytic residue.

The enzyme catalyses Thiol-dependent hydrolysis of ester, thioester, amide, peptide and isopeptide bonds formed by the C-terminal Gly of ubiquitin (a 76-residue protein attached to proteins as an intracellular targeting signal).. In terms of biological role, hydrolase that can remove conjugated ubiquitin from proteins and may therefore play an important regulatory role at the level of protein turnover by preventing degradation. May be involved in TIV genomic DNA packaging in a manner related to the Gag polyproteins of the mammalian viruses. In Tipula iridescent virus (TIV), this protein is Putative ubiquitin thioesterase L96.